Consider the following 76-residue polypeptide: Acyl carrier protein (76 aa).

Residues 1 to 76 (MSVEEKVKKI…DAIDYVSNKQ (76 aa)) enclose the Carrier domain. Ser36 bears the O-(pantetheine 4'-phosphoryl)serine mark.

It belongs to the acyl carrier protein (ACP) family. 4'-phosphopantetheine is transferred from CoA to a specific serine of apo-ACP by AcpS. This modification is essential for activity because fatty acids are bound in thioester linkage to the sulfhydryl of the prosthetic group.

It is found in the cytoplasm. Its pathway is lipid metabolism; fatty acid biosynthesis. In terms of biological role, carrier of the growing fatty acid chain in fatty acid biosynthesis. This is Acyl carrier protein from Nitratidesulfovibrio vulgaris (strain ATCC 29579 / DSM 644 / CCUG 34227 / NCIMB 8303 / VKM B-1760 / Hildenborough) (Desulfovibrio vulgaris).